A 407-amino-acid polypeptide reads, in one-letter code: Putative colanic acid biosynthesis glycosyl transferase WcaI (407 aa).

Its pathway is slime biogenesis; slime polysaccharide biosynthesis. This chain is Putative colanic acid biosynthesis glycosyl transferase WcaI (wcaI), found in Escherichia coli (strain K12).